The sequence spans 608 residues: Rap1 GTPase-GDP dissociation stimulator 1 (608 aa).

ARM repeat units lie at residues 89 to 131 (GLIS…DQAG) and 171 to 212 (DSLQ…NLAE). The prevents binding to prenylated RHOA stretch occupies residues 122 to 171 (EGRSAVDQAGGAQIVVDHLRSLCSKTDPASEKLLTVFCGMLMNYSNEKND). Position 231 is an N6-acetyllysine (lysine 231). 3 ARM repeats span residues 348-391 (DGNC…NLAI), 392-432 (PVVN…MLID), and 480-520 (SKDV…LIAA).

In terms of assembly, interacts with RABL3. Interacts with RHOT1. As to quaternary structure, interacts with unprenylated RHOA; the interaction is direct. Interacts with RAP1A. Interacts with KRAS. Interacts with RAC1. Interacts with RAP1B. Preferentially interacts with unprenylated GTPases that will become geranylgeranylated. May also interact with prenylated GTPases. Interacts with prenylated RHOA; the interaction is direct and in a 1:1 stoichiometry. Interacts with RAP1A. Interacts with KRAS. Interacts with RAC1. Interacts with RAP1B. Preferentially interacts with prenylated GTPases. In terms of processing, the N-terminus is blocked. Forms covalent cross-links mediated by transglutaminase TGM2, between a glutamine and the epsilon-amino group of a lysine residue, forming homopolymers and heteropolymers. As to expression, brain.

The protein localises to the cytoplasm. The protein resides in the cytosol. It is found in the endoplasmic reticulum. It localises to the mitochondrion. Its subcellular location is the nucleus. In terms of biological role, acts as a GEF (guanine nucleotide exchange factor) for the Rho family of small GTP-binding proteins (G proteins) that stimulates the dissociation of GDP to enable subsequent binding of GTP. Additionally, appears to chaperone the processing and/or trafficking of small GTPases containing a C-terminal polybasic region independently of GEF activity. Targets include RAP1A/RAP1B, RHOA, RHOB, RHOC, RAC1 and KRAS. Regulates mitochondrial dynamics by controlling RHOT function to promote mitochondrial fission during high calcium conditions. Able to promote the Ca(2+) release from the endoplasmic reticulum via both inositol trisphosphate (Ins3P) and ryanodine sensitive receptors leading to a enhanced mitochondrial Ca(2+) uptake. Its function is as follows. Acts as a GEF (guanine nucleotide exchange factor) for unprenylated RHOA. Chaperones the entry and passage of small GTPases through the prenylation pathway. Recognizes the last amino acid in the GTPase C-terminal CAAX motif with a preference for 'Leu' over 'Met', indicating involvement in the geranylgeranylation pathway. May also recognize prenylated GTPases. Functionally, acts as a GEF (guanine nucleotide exchange factor) for prenylated RHOA. Acts as a GEF for RHOC. Chaperones the downstream trafficking and/or processing of small newly prenylated GTPases. Escorts RAC1 to the nucleus. This chain is Rap1 GTPase-GDP dissociation stimulator 1 (RAP1GDS1), found in Bos taurus (Bovine).